The sequence spans 128 residues: MGAEYGCLPSTSQALYVILLIVLVRMSLVFVQFPKYLRCYRCLLETKELGCLLGSDICLAPPGSSCMTLLIKNSSSGSDIMVSDCRHKEQMSDCSYTRSSPVFGFWIFSRCCLREFCNNPQNRVFYIP.

The signal sequence occupies residues 1-29 (MGAEYGCLPSTSQALYVILLIVLVRMSLV). In terms of domain architecture, UPAR/Ly6 spans 37–128 (LRCYRCLLET…NPQNRVFYIP (92 aa)). 5 disulfide bridges follow: Cys-39/Cys-66, Cys-42/Cys-51, Cys-58/Cys-85, Cys-94/Cys-111, and Cys-112/Cys-117. N-linked (GlcNAc...) asparagine glycosylation is present at Asn-73.

In terms of assembly, forms oligomers. Post-translationally, N-glycosylated. As to expression, abundantly expressed in the epididymis.

Its subcellular location is the secreted. Its function is as follows. May have a role in hematopoietic cell differentiation. The chain is Lymphocyte antigen 6 complex locus protein G5c (LY6G5C) from Canis lupus familiaris (Dog).